The following is a 420-amino-acid chain: Reticulon-4 receptor-like 2 (420 aa).

A signal peptide spans 1–30 (MLPGLRRLLQGPASACLLLTLLALPPVTPS). Cystine bridges form between Cys31–Cys37 and Cys35–Cys46. One can recognise an LRRNT domain in the interval 31 to 60 (CPMLCTCYSSPPTVSCQANNFSSVPLSLPP). Asn50 carries an N-linked (GlcNAc...) asparagine glycan. LRR repeat units lie at residues 61–82 (STQR…TFGP), 83–104 (NLLT…TFRH), 107–129 (ALEE…TFQG), 132–153 (RLQS…IFRG), 156–177 (SLQY…LFAD), 180–201 (NLSH…VFRG), 204–225 (SLDR…AFHG), and 228–249 (RLTI…ALAD). Asn93 is a glycosylation site (N-linked (GlcNAc...) asparagine). Asn236 carries an N-linked (GlcNAc...) asparagine glycan. In terms of domain architecture, LRRCT spans 261 to 312 (NPWACDCRARPLWAWFQRARVSSSDVTCATPPERQGRDLRTLRDTDFQACPP). Intrachain disulfides connect Cys265–Cys288 and Cys267–Cys310. The segment at 286–390 (VTCATPPERQ…GEQTCPGAAC (105 aa)) is disordered. Residues 294 to 306 (RQGRDLRTLRDTD) are compositionally biased toward basic and acidic residues. The segment at 315–327 (PTRPGSRARGNSS) is important for interaction with MAG. Positions 351–360 (LPAEDSRGRQ) are enriched in basic and acidic residues. Residue Cys390 is the site of GPI-anchor amidated cysteine attachment. Positions 391–420 (QAPADSRGPVLSAGLRTPLLCLLLLAPHHL) are cleaved as a propeptide — removed in mature form.

It belongs to the Nogo receptor family. As to quaternary structure, interaction with MAG is controversial, and may be indirect. Interacts with MAG. Does not interact with OMG and RTN4. Post-translationally, undergoes zinc metalloproteinase-mediated ectodomain shedding in neuroblastoma cells; is released both as a full-length ectodomain and an N-terminal fragment containing the leucine-rich repeat (LRR) region of the protein. In terms of processing, N-glycosylated. O-glycosylated. Contains terminal sialic acid groups on its glycan chains. Detected in adult brain, in neocortex, hippocampus, striatum and dorsal root ganglion neurons, and in retina (at protein level). In brain, detected in cerebral cortex and hippocampus. Weak or no expression detected in the cerebellum, thalamus or striatum.

The protein localises to the cell membrane. The protein resides in the cell projection. It is found in the dendrite. It localises to the perikaryon. Its subcellular location is the axon. The protein localises to the membrane raft. Its function is as follows. Cell surface receptor that plays a functionally redundant role in the inhibition of neurite outgrowth mediated by MAG. Plays a functionally redundant role in postnatal brain development. Contributes to normal axon migration across the brain midline and normal formation of the corpus callosum. Does not seem to play a significant role in regulating axon regeneration in the adult central nervous system. Protects motoneurons against apoptosis; protection against apoptosis is probably mediated by MAG. Like other family members, plays a role in restricting the number dendritic spines and the number of synapses that are formed during brain development. Signaling mediates activation of Rho and downstream reorganization of the actin cytoskeleton. The sequence is that of Reticulon-4 receptor-like 2 from Rattus norvegicus (Rat).